Reading from the N-terminus, the 464-residue chain is ATP synthase subunit beta (464 aa).

150–157 is an ATP binding site; sequence GGAGVGKT.

Belongs to the ATPase alpha/beta chains family. F-type ATPases have 2 components, CF(1) - the catalytic core - and CF(0) - the membrane proton channel. CF(1) has five subunits: alpha(3), beta(3), gamma(1), delta(1), epsilon(1). CF(0) has three main subunits: a(1), b(2) and c(9-12). The alpha and beta chains form an alternating ring which encloses part of the gamma chain. CF(1) is attached to CF(0) by a central stalk formed by the gamma and epsilon chains, while a peripheral stalk is formed by the delta and b chains.

The protein resides in the cell membrane. The enzyme catalyses ATP + H2O + 4 H(+)(in) = ADP + phosphate + 5 H(+)(out). Its function is as follows. Produces ATP from ADP in the presence of a proton gradient across the membrane. The catalytic sites are hosted primarily by the beta subunits. The polypeptide is ATP synthase subunit beta (Dehalococcoides mccartyi (strain ATCC BAA-2100 / JCM 16839 / KCTC 5957 / BAV1)).